The chain runs to 180 residues: Cytokinin-beta-glucosidase 2 (180 aa).

In terms of biological role, hydrolyzes cytokinin glucosides thus liberating free cytokinins. In Panax ginseng (Korean ginseng), this protein is Cytokinin-beta-glucosidase 2 (ROLC2).